The chain runs to 251 residues: MAVHLLIVDALNLIRRIHAVQGSPCVDTCLHALEQLIVHSQPTHAVAVFDDEDRAHGWRHQRLPEYKAGRAPMPETLVAEMPALRAAFEQRGIRCWASPGSEADDLAATLAVKVAQAGHQATIVSTDKGYCQLLSPTIRIRDYFQKRWLDAPFIASEFGVTPEQLADYWGLAGISSSKVPGVAGIGPKSAAQLLNEFQDLEGLYARLAEVPEKWRKKLAAHQEMAFTCREVARLQTDLQLDGNLQQLRLTR.

Residue aspartate 104 participates in Mg(2+) binding. A 5'-3' exonuclease domain is found at 160–249 (VTPEQLADYW…LDGNLQQLRL (90 aa)). K(+)-binding residues include leucine 171, alanine 172, proline 180, valine 182, and isoleucine 185. The interval 184–189 (GIGPKS) is interaction with DNA.

This sequence belongs to the Xni family. Mg(2+) serves as cofactor. K(+) is required as a cofactor.

In terms of biological role, has flap endonuclease activity. During DNA replication, flap endonucleases cleave the 5'-overhanging flap structure that is generated by displacement synthesis when DNA polymerase encounters the 5'-end of a downstream Okazaki fragment. This is Flap endonuclease Xni from Klebsiella pneumoniae subsp. pneumoniae (strain ATCC 700721 / MGH 78578).